The chain runs to 504 residues: CDK5 regulatory subunit-associated protein 3 (504 aa).

Short sequence motifs (shuffled ATG8-binding motif) lie at residues 266–269 (IDWG), 290–293 (IDWG), and 308–311 (IDWG). The required for interaction with UFL1 and mediates interaction with CHEK1 stretch occupies residues 268-504 (WGDFGLEAVS…RPVNLMGTSV (237 aa)). The segment at 353–368 (DELMELEIFLSQRAVE) is RPL10a-binding domain (RBD). Lysine 448 is covalently cross-linked (Glycyl lysine isopeptide (Lys-Gly) (interchain with G-Cter in SUMO2)).

It belongs to the CDK5RAP3 family. As to quaternary structure, substrate adapter component of the UFM1 ribosome E3 ligase (UREL) complex, composed of UFL1, DDRGK1 and CDK5RAP3. Interaction with UFL1 anchors CDK5RAP3 in the cytoplasm, preventing its translocation to the nucleus which allows expression of the CCND1 cyclin and progression of cells through the G1/S transition. Interacts with ATG8 family proteins MAP1LC3A, MAP1LC3B, GABARAP, GABARAPL1 and GABARAPL2. Interacts with CDK5R1; competes with CDK5RAP1 and CDK5RAP2. Interacts with RELA. Interacts with CHEK1; may negatively regulate CHEK1 and thereby stimulate entry into mitosis. Interacts with CDKN2A/ARF and MDM2; forms a ternary complex involved in regulation of p53/TP53. Interacts with MAPK14. Interacts with CCNB1. Interacts with TUBG1; may regulate CDK5RAP3 in mitotic G2/M transition checkpoint. Post-translationally, may be phosphorylated by CDK5. In terms of processing, ubiquitinated. Probably triggers proteasomal degradation and is negatively regulated by UFL1. May be ufmylated. Post-translationally, cleaved by caspases early during apoptosis, the resulting peptides may play a role in rupture of the nuclear envelope. Expressed in vascular endothelium. Up-regulated in failing heart. Highly expressed in the ventricular section in subacute and chronic ischemic heart failure.

The protein resides in the endoplasmic reticulum membrane. Its subcellular location is the cytoplasm. The protein localises to the nucleus. It localises to the cytoskeleton. It is found in the microtubule organizing center. The protein resides in the centrosome. Substrate adapter of E3 ligase complexes mediating ufmylation, the covalent attachment of the ubiquitin-like modifier UFM1 to substrate proteins, and which is involved in various processes, such as ribosome recycling and reticulophagy (also called ER-phagy). As part of the UREL complex, plays a key role in ribosome recycling by promoting mono-ufmylation of RPL26/uL24 subunit of the 60S ribosome. Ufmylation of RPL26/uL24 occurs on free 60S ribosomes following ribosome dissociation: it weakens the junction between post-termination 60S subunits and SEC61 translocons, promoting release and recycling of the large ribosomal subunit from the endoplasmic reticulum membrane. Ufmylation of RPL26/uL24 and subsequent 60S ribosome recycling either take place after normal termination of translation or after ribosome stalling during cotranslational translocation at the endoplasmic reticulum. Within the UREL complex, CDK5RAP3 acts as a substrate adapter that constrains UFL1 ligase activity to mono-ufmylate RPL26/uL24 at 'Lys-134'. The UREL complex is also involved in reticulophagy in response to endoplasmic reticulum stress by promoting ufmylation of proteins such as CYB5R3, thereby promoting lysosomal degradation of ufmylated proteins. Also acts as a regulator of transcription: negatively regulates NF-kappa-B-mediated gene transcription through the control of RELA phosphorylation. Also regulates mitotic G2/M transition checkpoint and mitotic G2 DNA damage checkpoint. Through its interaction with CDKN2A/ARF and MDM2 may induce MDM2-dependent p53/TP53 ubiquitination, stabilization and activation in the nucleus, thereby promoting G1 cell cycle arrest and inhibition of cell proliferation. May also play a role in the rupture of the nuclear envelope during apoptosis. May regulate MAPK14 activity by regulating its dephosphorylation by PPM1D/WIP1. Required for liver development. The polypeptide is CDK5 regulatory subunit-associated protein 3 (Rattus norvegicus (Rat)).